Consider the following 297-residue polypeptide: N-acetylmannosamine kinase (297 aa).

ATP contacts are provided by residues 5-12 and 132-139; these read ALDIGGTK and GVGGGIIL. Histidine 156, cysteine 166, cysteine 168, and cysteine 173 together coordinate Zn(2+).

It belongs to the ROK (NagC/XylR) family. NanK subfamily. As to quaternary structure, homodimer.

It carries out the reaction an N-acyl-D-mannosamine + ATP = an N-acyl-D-mannosamine 6-phosphate + ADP + H(+). It functions in the pathway amino-sugar metabolism; N-acetylneuraminate degradation; D-fructose 6-phosphate from N-acetylneuraminate: step 2/5. Its function is as follows. Catalyzes the phosphorylation of N-acetylmannosamine (ManNAc) to ManNAc-6-P. This Pasteurella multocida (strain Pm70) protein is N-acetylmannosamine kinase.